Here is a 65-residue protein sequence, read N- to C-terminus: Large ribosomal subunit protein bL35 (65 aa).

The interval 1–28 is disordered; it reads MPKMKTNRSAAKRFGKTGSGKFTRRRQN.

Belongs to the bacterial ribosomal protein bL35 family.

This Solidesulfovibrio magneticus (strain ATCC 700980 / DSM 13731 / RS-1) (Desulfovibrio magneticus) protein is Large ribosomal subunit protein bL35.